The sequence spans 619 residues: N-acetylmuramoyl-L-alanine amidase domain-containing protein SAOUHSC_02979 (619 aa).

Residues M1–A27 form the signal peptide. 3 disordered regions span residues A25 to D83, S134 to D226, and E238 to D290. Composition is skewed to basic and acidic residues over residues P30 to K65, N73 to D82, and E137 to T146. Positions N147 to S156 are enriched in low complexity. Positions I157–K175 are enriched in basic and acidic residues. The span at A176–N192 shows a compositional bias: polar residues. Residues Q214 to D226 show a composition bias toward low complexity. Over residues E238–N260 the composition is skewed to basic and acidic residues. An N-acetylmuramoyl-L-alanine amidase region spans residues I327–L468. Positions D488–T617 constitute a Peptidase C51 domain.

The protein in the N-terminal section; belongs to the N-acetylmuramoyl-L-alanine amidase 2 family.

The protein resides in the secreted. This Staphylococcus aureus (strain NCTC 8325 / PS 47) protein is N-acetylmuramoyl-L-alanine amidase domain-containing protein SAOUHSC_02979.